We begin with the raw amino-acid sequence, 933 residues long: Anoctamin-7 (933 aa).

Residues 1–355 (MRMAATAWAG…YFAWLGFYTG (355 aa)) lie on the Cytoplasmic side of the membrane. Residues 43–101 (ETSSGSHCARSRMLRRRAQEEDSTVLIDVSPPEAEKRGSYGSTAHASEPGGQQAAACRA) are disordered. A helical membrane pass occupies residues 356–376 (WLLPAAVVGTLVFLVGCFLVF). Over 377-420 (SDIPTQELCGSKDSFEMCPLCLDCPFWLLSSACALAQAGRLFDH) the chain is Extracellular. Residues 421 to 441 (GGTVFFSLFMALWAVLLLEYW) form a helical membrane-spanning segment. The Cytoplasmic segment spans residues 442 to 499 (KRKSATLAYRWDCSDYEDTEERPRPQFAASAPMTAPNPITGEDEPYFPERSRARRMLA). The helical transmembrane segment at 500–520 (GSVVIVVMVAVVVMCLVSIIL) threads the bilayer. The Extracellular portion of the chain corresponds to 521 to 550 (YRAIMAIVVSRSGNTLLAAWASRIASLTGS). The helical transmembrane segment at 551-571 (VVNLVFILILSKIYVSLAHVL) threads the bilayer. The Cytoplasmic portion of the chain corresponds to 572-588 (TRWEMHRTQTKFEDAFT). Residues 589–609 (LKVFIFQFVNFYSSPVYIAFF) form a helical membrane-spanning segment. At 610-714 (KGRFVGYPGN…FDEYLEMVLQ (105 aa)) the chain is on the extracellular side. Residues 715–735 (FGFVTIFVAACPLAPLFALLN) traverse the membrane as a helical segment. The Cytoplasmic portion of the chain corresponds to 736 to 763 (NWVEIRLDARKFVCEYRRPVAERAQDIG). The helical transmembrane segment at 764–784 (IWFHILAGLTHLAVISNAFLL) threads the bilayer. Over 785-843 (AFSSDFLPRAYYRWTRAHDLRGFLNFTLARAPSSFAAAHNRTCRYRAFRDDDGHYSQTY) the chain is Extracellular. Residues Asn809 and Asn824 are each glycosylated (N-linked (GlcNAc...) asparagine). Residues 844-864 (WNLLAIRLAFVIVFEHVVFSV) traverse the membrane as a helical segment. Residues 865 to 933 (GRLLDLLVPD…TVPKASQLQQ (69 aa)) lie on the Cytoplasmic side of the membrane. The segment at 902–933 (GTNGTKDEQPEGSELSSHWTPFTVPKASQLQQ) is disordered. Residues 915 to 933 (ELSSHWTPFTVPKASQLQQ) are compositionally biased toward polar residues.

It belongs to the anoctamin family. As to expression, specifically expressed in epithelial cells of the prostate (at protein level).

Its subcellular location is the cell membrane. It is found in the cell junction. It localises to the endoplasmic reticulum. The protein resides in the cytoplasm. The protein localises to the cytosol. It catalyses the reaction a 1,2-diacyl-sn-glycero-3-phospho-L-serine(in) = a 1,2-diacyl-sn-glycero-3-phospho-L-serine(out). The enzyme catalyses a beta-D-galactosyl-(1&lt;-&gt;1')-N-acylsphing-4-enine(out) = a beta-D-galactosyl-(1&lt;-&gt;1')-N-acylsphing-4-enine(in). The catalysed reaction is a 1,2-diacyl-sn-glycero-3-phosphocholine(in) = a 1,2-diacyl-sn-glycero-3-phosphocholine(out). Has calcium-dependent phospholipid scramblase activity; scrambles phosphatidylserine, phosphatidylcholine and galactosylceramide. Does not exhibit calcium-activated chloride channel (CaCC) activity. May play a role in cell-cell interactions. In Homo sapiens (Human), this protein is Anoctamin-7 (ANO7).